Consider the following 153-residue polypeptide: Pheromone-binding protein Gp-9 (153 aa).

The first 19 residues, 1–19 (MKTFVLHIFIFAFVAFASA), serve as a signal peptide directing secretion. Disulfide bonds link Cys-37/Cys-77, Cys-73/Cys-129, and Cys-118/Cys-138.

The protein belongs to the PBP/GOBP family. Homodimer.

It localises to the secreted. In terms of biological role, colony queen number, a major feature of social organization, is associated with worker genotype for Gp-9. Colonies are headed by either a single reproductive queen (monogyne form) or multiple queens (polygyne form). Differences in worker Gp-9 genotypes between social forms may cause differences in workers' abilities to recognize queens and regulate their numbers. The polypeptide is Pheromone-binding protein Gp-9 (Solenopsis amblychila (Desert fire ant)).